A 297-amino-acid chain; its full sequence is N-acetylmuramic acid 6-phosphate etherase (297 aa).

Positions 55–218 (AAAALKSGGR…STGAMVKFGK (164 aa)) constitute an SIS domain. Catalysis depends on glutamate 83, which acts as the Proton donor. Glutamate 114 is an active-site residue.

It belongs to the GCKR-like family. MurNAc-6-P etherase subfamily. Homodimer.

The enzyme catalyses N-acetyl-D-muramate 6-phosphate + H2O = N-acetyl-D-glucosamine 6-phosphate + (R)-lactate. The protein operates within amino-sugar metabolism; 1,6-anhydro-N-acetylmuramate degradation. Its pathway is amino-sugar metabolism; N-acetylmuramate degradation. It participates in cell wall biogenesis; peptidoglycan recycling. Specifically catalyzes the cleavage of the D-lactyl ether substituent of MurNAc 6-phosphate, producing GlcNAc 6-phosphate and D-lactate. Together with AnmK, is also required for the utilization of anhydro-N-acetylmuramic acid (anhMurNAc) either imported from the medium or derived from its own cell wall murein, and thus plays a role in cell wall recycling. In Salmonella schwarzengrund (strain CVM19633), this protein is N-acetylmuramic acid 6-phosphate etherase.